We begin with the raw amino-acid sequence, 361 residues long: Putative F-box protein At3g25460 (361 aa).

The F-box domain maps to 1–45; it reads MMMPELPEDLLVEILCRVPATSLKRLRSTCKLWNHLYNDKRFKSK.

This Arabidopsis thaliana (Mouse-ear cress) protein is Putative F-box protein At3g25460.